A 192-amino-acid chain; its full sequence is Putative manganese efflux pump MntP (192 aa).

6 consecutive transmembrane segments (helical) span residues 3–23 (LIFT…AVSF), 38–58 (FILA…GWLL), 61–81 (GFAD…LFII), 101–121 (VFNF…ALAV), 130–150 (IVPL…SVGG), and 167–187 (ILGG…HLVW).

The protein belongs to the MntP (TC 9.B.29) family.

It localises to the cell membrane. In terms of biological role, probably functions as a manganese efflux pump. This Methanospirillum hungatei JF-1 (strain ATCC 27890 / DSM 864 / NBRC 100397 / JF-1) protein is Putative manganese efflux pump MntP.